Consider the following 64-residue polypeptide: Large ribosomal subunit protein bL33 (64 aa).

Belongs to the bacterial ribosomal protein bL33 family.

The chain is Large ribosomal subunit protein bL33 from Rippkaea orientalis (strain PCC 8801 / RF-1) (Cyanothece sp. (strain PCC 8801)).